The sequence spans 57 residues: Plasma membrane proteolipid 3 (57 aa).

A helical transmembrane segment spans residues 34-54; the sequence is INILLTILGYLPGIVHALYII.

Belongs to the UPF0057 (PMP3) family.

The protein resides in the cell membrane. Plays a role in the regulation of membrane potential. Could mediate a proton leak. The sequence is that of Plasma membrane proteolipid 3 (pmp-1) from Neurospora crassa (strain ATCC 24698 / 74-OR23-1A / CBS 708.71 / DSM 1257 / FGSC 987).